The chain runs to 175 residues: ATP synthase subunit b (175 aa).

Residues 22 to 44 form a helical membrane-spanning segment; it reads MLVQLFFFLILLALLKKFAWGPL.

Belongs to the ATPase B chain family. F-type ATPases have 2 components, F(1) - the catalytic core - and F(0) - the membrane proton channel. F(1) has five subunits: alpha(3), beta(3), gamma(1), delta(1), epsilon(1). F(0) has three main subunits: a(1), b(2) and c(10-14). The alpha and beta chains form an alternating ring which encloses part of the gamma chain. F(1) is attached to F(0) by a central stalk formed by the gamma and epsilon chains, while a peripheral stalk is formed by the delta and b chains.

The protein localises to the cell membrane. Its function is as follows. F(1)F(0) ATP synthase produces ATP from ADP in the presence of a proton or sodium gradient. F-type ATPases consist of two structural domains, F(1) containing the extramembraneous catalytic core and F(0) containing the membrane proton channel, linked together by a central stalk and a peripheral stalk. During catalysis, ATP synthesis in the catalytic domain of F(1) is coupled via a rotary mechanism of the central stalk subunits to proton translocation. In terms of biological role, component of the F(0) channel, it forms part of the peripheral stalk, linking F(1) to F(0). In Oceanobacillus iheyensis (strain DSM 14371 / CIP 107618 / JCM 11309 / KCTC 3954 / HTE831), this protein is ATP synthase subunit b.